A 145-amino-acid polypeptide reads, in one-letter code: MDLTSKVNRLLAEFAGRIGLPSLSLDEEGMASLLFDEQVGVTLLLLAERERLLLEADVAGIDVLGEGIFRQLASFNRHWHRFDLHFGFDELTGKVQLYAQILAAQLTLECFEATLANLLDHAEFWQRLLPCDSDREAVAAVGMRV.

In terms of assembly, homodimer. Interacts with ExsE. Interacts directly with ExsD to form a heterotetrameric complex.

It is found in the cytoplasm. In the absence of inducing signals, ExsE interacts with and inhibits ExsC activity. Part of the regulatory cascade that plays a role in the transcriptional regulation of the type III secretion system (T3SS). Interacts with antiactivator ExsD to inhibit its activity leading to ExsA-mediated transcription. The polypeptide is Transcriptional anti-antiactivator ExsC (exsC) (Pseudomonas aeruginosa (strain ATCC 15692 / DSM 22644 / CIP 104116 / JCM 14847 / LMG 12228 / 1C / PRS 101 / PAO1)).